The primary structure comprises 475 residues: NADH-ubiquinone oxidoreductase chain 2 (475 aa).

The next 13 membrane-spanning stretches (helical) occupy residues 45-65 (LAVLALSFVAYLAWESIGIQY), 82-102 (APIVLLLIILVITLLVYLTTT), 112-132 (IALLMLVNLIGLILFPMVNDL), 133-153 (IPLYVIIELQSYSLYLLTGVY), 162-182 (AAILYFVTGGIASVLILLSSA), 198-220 (TYYSISGINTWTSFDILLIALVF), 240-260 (LYITAYISIVAKVSIMSFIYL), 262-282 (IHLFSTQLLILAFYLSVAVAA), 291-311 (IKSILAYSGILNFGYLLTAVL), 318-338 (YIYIIQYSLTHVTIFLCILAI), 365-385 (LCIALIVCLFSLIGIPPLPGF), 402-422 (LEALTIIVFSVIATYYYAYII), and 447-467 (FIISILMVILITFYMYLPTLL).

It belongs to the complex I subunit 2 family.

The protein localises to the mitochondrion inner membrane. The enzyme catalyses a ubiquinone + NADH + 5 H(+)(in) = a ubiquinol + NAD(+) + 4 H(+)(out). Functionally, core subunit of the mitochondrial membrane respiratory chain NADH dehydrogenase (Complex I) that is believed to belong to the minimal assembly required for catalysis. Complex I functions in the transfer of electrons from NADH to the respiratory chain. The immediate electron acceptor for the enzyme is believed to be ubiquinone. The chain is NADH-ubiquinone oxidoreductase chain 2 (NAD2) from Candida albicans (strain SC5314 / ATCC MYA-2876) (Yeast).